We begin with the raw amino-acid sequence, 376 residues long: Carbamoyl phosphate synthase small chain (376 aa).

A nucleophile region spans residues 1-181 (MSKAVLVLED…VEPDGPPGVS (181 aa)). The tract at residues 1–183 (MSKAVLVLED…PDGPPGVSRF (183 aa)) is CPSase. Positions 46, 232, 234, 261, 264, 302, 304, and 305 each coordinate L-glutamine. The region spanning 184 to 376 (TVAALDLGIK…FVELMAGEGR (193 aa)) is the Glutamine amidotransferase type-1 domain. Catalysis depends on residues H350 and E352.

The protein belongs to the CarA family. Composed of two chains; the small (or glutamine) chain promotes the hydrolysis of glutamine to ammonia, which is used by the large (or ammonia) chain to synthesize carbamoyl phosphate. Tetramer of heterodimers (alpha,beta)4.

The enzyme catalyses hydrogencarbonate + L-glutamine + 2 ATP + H2O = carbamoyl phosphate + L-glutamate + 2 ADP + phosphate + 2 H(+). The catalysed reaction is L-glutamine + H2O = L-glutamate + NH4(+). It functions in the pathway amino-acid biosynthesis; L-arginine biosynthesis; carbamoyl phosphate from bicarbonate: step 1/1. Its pathway is pyrimidine metabolism; UMP biosynthesis via de novo pathway; (S)-dihydroorotate from bicarbonate: step 1/3. Its function is as follows. Small subunit of the glutamine-dependent carbamoyl phosphate synthetase (CPSase). CPSase catalyzes the formation of carbamoyl phosphate from the ammonia moiety of glutamine, carbonate, and phosphate donated by ATP, constituting the first step of 2 biosynthetic pathways, one leading to arginine and/or urea and the other to pyrimidine nucleotides. The small subunit (glutamine amidotransferase) binds and cleaves glutamine to supply the large subunit with the substrate ammonia. The sequence is that of Carbamoyl phosphate synthase small chain from Mycobacterium tuberculosis (strain CDC 1551 / Oshkosh).